Here is a 649-residue protein sequence, read N- to C-terminus: Endoplasmic reticulum chaperone BiP (649 aa).

The N-terminal stretch at 1 to 20 (MGLSTYVGTFLLCILTLSHC) is a signal peptide. Residues 36–39 (GTTY), K96, 226–228 (GGT), 292–299 (EKAKRTLS), and 363–366 (GSTR) each bind ATP. Residues 125–279 (KPYMKVQVGS…KKKEGKDITK (155 aa)) are nucleotide-binding (NBD). The segment at 399–499 (VQAGVISGVE…PRGLPQIEVT (101 aa)) is substrate-binding (SBD). Positions 646–649 (KEEL) match the Prevents secretion from ER motif.

The protein belongs to the heat shock protein 70 family.

It localises to the endoplasmic reticulum lumen. It catalyses the reaction ATP + H2O = ADP + phosphate + H(+). The chaperone activity is regulated by ATP-induced allosteric coupling of the nucleotide-binding (NBD) and substrate-binding (SBD) domains. In the ADP-bound and nucleotide-free (apo) states, the two domains have little interaction. In contrast, in the ATP-bound state the two domains are tightly coupled, which results in drastically accelerated kinetics in both binding and release of polypeptide substrates. J domain-containing co-chaperones stimulate the ATPase activity and are required for efficient substrate recognition. Functionally, endoplasmic reticulum chaperone that plays a key role in protein folding and quality control in the endoplasmic reticulum lumen. Involved in the correct folding of proteins and degradation of misfolded proteins. Acts as a key repressor of the unfolded protein response (UPR). This chain is Endoplasmic reticulum chaperone BiP, found in Echinococcus multilocularis (Fox tapeworm).